The sequence spans 295 residues: Small ribosomal subunit protein uS2 (295 aa).

Ser-2 is modified (N-acetylserine). Phosphoserine is present on Ser-43. Position 52 is an N6-acetyllysine (Lys-52). The interval 54-113 is interaction with PPP1R16B; that stretch reads TWEKLLLAARAIVAIENPADVSVISSRNTGQRAVLKFAAATGATPIAGRFTPGTFTNQIQ. An N6-acetyllysine; alternate modification is found at Lys-89. Residue Lys-89 forms a Glycyl lysine isopeptide (Lys-Gly) (interchain with G-Cter in SUMO2); alternate linkage. Thr-97 bears the Phosphothreonine mark. 2 laminin-binding regions span residues 161 to 180 and 205 to 229; these read IPCNNKGAHSVGLMWWMLAR and RDPEEIEKEEQAAAEKAVTKEEFQG. [DE]-W-[ST] repeat units follow at residues 230-232, 247-249, 266-268, 275-277, and 293-295; these read EWT, DWS, and EWS. The interval 242-295 is laminin-binding; that stretch reads QPEVADWSEGVQVPSVPIQQFPTEDWSAQPATEDWSAAPTAQATEWVGATTEWS. A disordered region spans residues 266–295; that stretch reads DWSAQPATEDWSAAPTAQATEWVGATTEWS.

The protein belongs to the universal ribosomal protein uS2 family. Monomer (37LRP) and homodimer (67LR). Component of the small ribosomal subunit. Mature ribosomes consist of a small (40S) and a large (60S) subunit. The 40S subunit contains about 33 different proteins and 1 molecule of RNA (18S). The 60S subunit contains about 49 different proteins and 3 molecules of RNA (28S, 5.8S and 5S). Interacts with RPS21. Interacts with several laminins including at least LAMB1. Interacts with MDK. The mature dimeric form interacts with PPP1R16B (via its fourth ankyrin repeat). Interacts with PPP1CA only in the presence of PPP1R16B. Acylated. Acylation may be a prerequisite for conversion of the monomeric 37 kDa laminin receptor precursor (37LRP) to the mature dimeric 67 kDa laminin receptor (67LR), and may provide a mechanism for membrane association. Post-translationally, cleaved by stromelysin-3 (ST3) at the cell surface. Cleavage by stromelysin-3 may be a mechanism to alter cell-extracellular matrix interactions. As to expression, expressed in most neurons and in a subset of glial cells. The overall distribution of LR correlates with that reported for laminin-1 but also with brain regions classically associated with prion-related neurodegeneration.

It is found in the cell membrane. The protein resides in the cytoplasm. The protein localises to the nucleus. Its function is as follows. Required for the assembly and/or stability of the 40S ribosomal subunit. Required for the processing of the 20S rRNA-precursor to mature 18S rRNA in a late step of the maturation of 40S ribosomal subunits. Also functions as a cell surface receptor for laminin. Plays a role in cell adhesion to the basement membrane and in the consequent activation of signaling transduction pathways. May play a role in cell fate determination and tissue morphogenesis. Also acts as a receptor for several other ligands, including the pathogenic prion protein, viruses, and bacteria. Acts as a PPP1R16B-dependent substrate of PPP1CA. The protein is Small ribosomal subunit protein uS2 (Rpsa) of Rattus norvegicus (Rat).